Reading from the N-terminus, the 418-residue chain is Thyroid hormone receptor alpha-B (418 aa).

The interval 1–40 (MDQNLSGLDCLSEPDEKRWPDGKRKRKNSQCMGKSGMSGD) is disordered. Residues 1-60 (MDQNLSGLDCLSEPDEKRWPDGKRKRKNSQCMGKSGMSGDSLVSLPPAGYIPSYLDKDEP) are modulating. NR C4-type zinc fingers lie at residues 61 to 81 (CVVCSDKATGYHYRCITCEGC) and 99 to 123 (CKYDGCCIIDKITRNQCQLCRFKKC). Residues 61–128 (CVVCSDKATG…RFKKCIAVGM (68 aa)) constitute a DNA-binding region (nuclear receptor). The 245-residue stretch at 171–415 (EEWELIRIVT…PPLFLEVFED (245 aa)) folds into the NR LBD domain.

It belongs to the nuclear hormone receptor family. NR1 subfamily. In terms of assembly, binds to thyroid hormone receptor element (TRE) weakly as homodimers and monomers, but binds TRE with much higher affinity as heterodimers with retinoid X receptors. Can bind DNA as a heterodimer with either rxra or rxrg.

Its subcellular location is the nucleus. Its function is as follows. High affinity receptor for triiodothyronine (T3). In Xenopus laevis (African clawed frog), this protein is Thyroid hormone receptor alpha-B (thra-b).